Reading from the N-terminus, the 89-residue chain is Small ribosomal subunit protein uS15 (89 aa).

The protein belongs to the universal ribosomal protein uS15 family. As to quaternary structure, part of the 30S ribosomal subunit. Forms a bridge to the 50S subunit in the 70S ribosome, contacting the 23S rRNA.

In terms of biological role, one of the primary rRNA binding proteins, it binds directly to 16S rRNA where it helps nucleate assembly of the platform of the 30S subunit by binding and bridging several RNA helices of the 16S rRNA. Its function is as follows. Forms an intersubunit bridge (bridge B4) with the 23S rRNA of the 50S subunit in the ribosome. The protein is Small ribosomal subunit protein uS15 of Chlorobium chlorochromatii (strain CaD3).